A 171-amino-acid chain; its full sequence is Protein-export protein SecB (171 aa).

This sequence belongs to the SecB family. As to quaternary structure, homotetramer, a dimer of dimers. One homotetramer interacts with 1 SecA dimer.

It localises to the cytoplasm. In terms of biological role, one of the proteins required for the normal export of preproteins out of the cell cytoplasm. It is a molecular chaperone that binds to a subset of precursor proteins, maintaining them in a translocation-competent state. It also specifically binds to its receptor SecA. The protein is Protein-export protein SecB of Gluconacetobacter diazotrophicus (strain ATCC 49037 / DSM 5601 / CCUG 37298 / CIP 103539 / LMG 7603 / PAl5).